Consider the following 193-residue polypeptide: MISKYNRPMENLSNLDYSSYLKGWIRTVPNWPQQGVMFRDITPLLQNPKTFRMLIDIYVHRYMMEKVDLVAGLDARGFIIGSVLAYELNVGFVPIRKKGKLPFTTVEEEYELEYGNAAVEMHTDACKPGDRVILIDDLVATGGTMMAGYKLLKRMGADVLEAAAIIELPELGGGQLVRDGGLDLFTVCSYEGH.

It belongs to the purine/pyrimidine phosphoribosyltransferase family. As to quaternary structure, homodimer.

The protein resides in the cytoplasm. It carries out the reaction AMP + diphosphate = 5-phospho-alpha-D-ribose 1-diphosphate + adenine. The protein operates within purine metabolism; AMP biosynthesis via salvage pathway; AMP from adenine: step 1/1. Catalyzes a salvage reaction resulting in the formation of AMP, that is energically less costly than de novo synthesis. The protein is Adenine phosphoribosyltransferase of Chromobacterium violaceum (strain ATCC 12472 / DSM 30191 / JCM 1249 / CCUG 213 / NBRC 12614 / NCIMB 9131 / NCTC 9757 / MK).